A 307-amino-acid polypeptide reads, in one-letter code: OTU domain-containing protein 2 (307 aa).

Disordered regions lie at residues 23–46 and 96–130; these read ENKD…RKEV and SRDE…AKRD. Positions 103 to 114 are enriched in low complexity; sequence QNVPVQQQQQGQ. The region spanning 167–307 is the OTU domain; sequence LKQFDIQPDG…GEHYNSLHDS (141 aa).

This chain is OTU domain-containing protein 2 (OTU2), found in Saccharomyces cerevisiae (strain ATCC 204508 / S288c) (Baker's yeast).